A 584-amino-acid polypeptide reads, in one-letter code: Alpha-glucosidase MAL12 (584 aa).

The active-site Nucleophile is the Asp-214. Residue Glu-276 is the Proton donor of the active site.

This sequence belongs to the glycosyl hydrolase 13 family.

It catalyses the reaction Hydrolysis of terminal, non-reducing (1-&gt;4)-linked alpha-D-glucose residues with release of alpha-D-glucose.. In Saccharomyces cerevisiae (strain ATCC 204508 / S288c) (Baker's yeast), this protein is Alpha-glucosidase MAL12 (MAL12).